We begin with the raw amino-acid sequence, 346 residues long: Aspartate-semialdehyde dehydrogenase (346 aa).

Residues 12–15 and 40–41 contribute to the NADP(+) site; these read SGAV and RS. Residue Arg101 coordinates phosphate. The active-site Acyl-thioester intermediate is the Cys131. Gln158 contacts substrate. 161-162 is an NADP(+) binding site; it reads SG. Lys225 is a phosphate binding site. Arg246 serves as a coordination point for substrate. The active-site Proton acceptor is the His253. Gln326 serves as a coordination point for NADP(+).

The protein belongs to the aspartate-semialdehyde dehydrogenase family. Homodimer.

It catalyses the reaction L-aspartate 4-semialdehyde + phosphate + NADP(+) = 4-phospho-L-aspartate + NADPH + H(+). It functions in the pathway amino-acid biosynthesis; L-lysine biosynthesis via DAP pathway; (S)-tetrahydrodipicolinate from L-aspartate: step 2/4. The protein operates within amino-acid biosynthesis; L-methionine biosynthesis via de novo pathway; L-homoserine from L-aspartate: step 2/3. It participates in amino-acid biosynthesis; L-threonine biosynthesis; L-threonine from L-aspartate: step 2/5. Functionally, catalyzes the NADPH-dependent formation of L-aspartate-semialdehyde (L-ASA) by the reductive dephosphorylation of L-aspartyl-4-phosphate. The polypeptide is Aspartate-semialdehyde dehydrogenase (Helicobacter pylori (strain ATCC 700392 / 26695) (Campylobacter pylori)).